A 397-amino-acid polypeptide reads, in one-letter code: Phosphoglycerate transport regulatory protein PgtC (397 aa).

The signal sequence occupies residues 1 to 24; the sequence is MFGSCQAYSRELVMATTFSPSATA. Residues 102-117 traverse the membrane as a helical segment; that stretch reads TSVAVAVSGFGLLINR.

It localises to the cell membrane. Its function is as follows. Required for pgtP expression, it may act jointly with the PgtA/PgtB signaling proteins. This chain is Phosphoglycerate transport regulatory protein PgtC (pgtC), found in Salmonella typhi.